Reading from the N-terminus, the 473-residue chain is Probable transporter MCH2 (473 aa).

Over 1–37 the chain is Cytoplasmic; sequence MSEERHEDHHRDVENKLNLNGKDDINGNTSISIEVPD. The chain crosses the membrane as a helical span at residues 38–58; the sequence is GGYGWFILLAFILYNFSTWGA. The Extracellular portion of the chain corresponds to 59–83; that stretch reads NSGYAIYLAHYLENNTFAGGSKLDY. A glycan (N-linked (GlcNAc...) asparagine) is linked at asparagine 72. The helical transmembrane segment at 84–105 threads the bilayer; that stretch reads ASIGGLAFSCGLFFAPVITWLY. The Cytoplasmic segment spans residues 106 to 111; it reads HIFSIQ. Residues 112–135 traverse the membrane as a helical segment; sequence FIIGLGILFQGAALLLAAFSVTLW. Residues 136–141 are Extracellular-facing; it reads EIYLTQ. Residues 142–163 form a helical membrane-spanning segment; the sequence is GVLIGFGLAFIFIPSVTLIPLW. The Cytoplasmic portion of the chain corresponds to 164 to 169; sequence FRNKRS. Residues 170–186 form a helical membrane-spanning segment; that stretch reads LASGIGTAGSGLGGIVF. Over 187-200 the chain is Extracellular; it reads NLGMQSILQKRGVK. Residues 201-220 form a helical membrane-spanning segment; sequence WALIAQCIICTSLSTIALML. The Cytoplasmic segment spans residues 221 to 243; it reads TRTTHQGLRQHKRSYKFELLDYD. The chain crosses the membrane as a helical span at residues 244-268; that stretch reads VLSNFAVWLLFGFVSFAMLGYVVLL. Residues 269 to 286 lie on the Extracellular side of the membrane; it reads YSLSDFTVSLGYTSKQGS. A helical transmembrane segment spans residues 287 to 304; sequence YVSCMVSVGSLLGRPIVG. Topologically, residues 305–312 are cytoplasmic; it reads HIADKYGS. The helical transmembrane segment at 313–332 threads the bilayer; it reads LTVGMILHLVMAILCWAMWI. The Extracellular segment spans residues 333-342; it reads PCKNLATAIA. The helical transmembrane segment at 343–362 threads the bilayer; that stretch reads FGLLVGSIMGTIWPTIASIV. The Cytoplasmic segment spans residues 363-370; the sequence is TRIVGLQK. Residues 371–394 form a helical membrane-spanning segment; that stretch reads LPGTFGSTWIFMAAFALVAPIIGL. Residues 395-408 are Extracellular-facing; the sequence is ELRSTDTNGNDYYR. The chain crosses the membrane as a helical span at residues 409 to 433; the sequence is TAIFVGFAYFGVSLCQWLLRGFIIA. The Cytoplasmic segment spans residues 434–473; that stretch reads RDEIAVREAYSADQNELHLNVKLSHMSKCLFRYKQLPRRV.

The protein belongs to the major facilitator superfamily. Monocarboxylate porter (TC 2.A.1.13) family.

The protein resides in the membrane. Probable transporter. Does not act in the transport of monocarboxylic acids across the plasma membrane. This is Probable transporter MCH2 (MCH2) from Saccharomyces cerevisiae (strain ATCC 204508 / S288c) (Baker's yeast).